We begin with the raw amino-acid sequence, 135 residues long: Large ribosomal subunit protein eL32 (135 aa).

It belongs to the eukaryotic ribosomal protein eL32 family.

The polypeptide is Large ribosomal subunit protein eL32 (Methanococcus maripaludis (strain C5 / ATCC BAA-1333)).